The primary structure comprises 228 residues: FtsZ-localized protein A (228 aa).

Residues 3–85 (VERTLHHFPL…HIEETETEPP (83 aa)) form the GST N-terminal domain. A GST C-terminal domain is found at 90 to 223 (DPAERAEARR…WPGLAPAAHY (134 aa)).

The protein belongs to the GST superfamily. As to quaternary structure, homodimer. Interacts with FtsZ filaments. Probably interacts with the GTPase domain of FtsZ.

It localises to the cytoplasm. Essential cell division protein that must bind to FtsZ for division to occur. Critical coordinator of envelope constriction through its interaction with FtsZ. Promotes the formation of highly curved FtsZ filaments, reduces the GTPase activity of FtsZ and stabilizes FtsZ polymers. May regulate FtsZ function by modulating its superstructure. Does not bind to glutathione. This Caulobacter vibrioides (strain NA1000 / CB15N) (Caulobacter crescentus) protein is FtsZ-localized protein A.